Reading from the N-terminus, the 369-residue chain is Anhydro-N-acetylmuramic acid kinase (369 aa).

12–19 provides a ligand contact to ATP; it reads GTSLDGVD.

The protein belongs to the anhydro-N-acetylmuramic acid kinase family.

It carries out the reaction 1,6-anhydro-N-acetyl-beta-muramate + ATP + H2O = N-acetyl-D-muramate 6-phosphate + ADP + H(+). The protein operates within amino-sugar metabolism; 1,6-anhydro-N-acetylmuramate degradation. It participates in cell wall biogenesis; peptidoglycan recycling. Its function is as follows. Catalyzes the specific phosphorylation of 1,6-anhydro-N-acetylmuramic acid (anhMurNAc) with the simultaneous cleavage of the 1,6-anhydro ring, generating MurNAc-6-P. Is required for the utilization of anhMurNAc either imported from the medium or derived from its own cell wall murein, and thus plays a role in cell wall recycling. In Escherichia coli (strain SE11), this protein is Anhydro-N-acetylmuramic acid kinase.